The following is a 366-amino-acid chain: Transmembrane protein 25 (366 aa).

Residues 1–26 (MALPPGPAALRHTLLLLPALLSSGWG) form the signal peptide. Topologically, residues 27 to 232 (ELEPQIDGQT…APGLLATRVE (206 aa)) are extracellular. Residues 30-123 (PQIDGQTWAE…SGRSANASVI (94 aa)) form the Ig-like domain. Residues C52 and C107 are joined by a disulfide bond. N106, N162, N175, N192, and N205 each carry an N-linked (GlcNAc...) asparagine glycan. A helical transmembrane segment spans residues 233–253 (VPLLGIVVAAGLALGTLVGFS). Residues 254–366 (TLVACLVCRK…SSVSSDEIWL (113 aa)) are Cytoplasmic-facing. The segment covering 299–308 (PSNLQLNDLT) has biased composition (polar residues). Residues 299–335 (PSNLQLNDLTPDSRAVKPADRQMAQNNSRPELLDPEP) form a disordered region.

As to quaternary structure, interacts with GRIN2B. As to expression, expressed throughout the brain with higher levels in the pyramidal cell layer of the hippocampal CA1 and CA3 regions. Also highly expressed within the hippocampal dentate gyrus region and cerebellum and in scattered neurons in the cerebral cortex.

It is found in the cell membrane. Its subcellular location is the secreted. The protein localises to the late endosome. The protein resides in the lysosome. Functionally, in neurons, modulates the degradation of NMDA receptor GRIN2B subunit. Plays a role in the regulation of neuronal excitability. The chain is Transmembrane protein 25 (TMEM25) from Homo sapiens (Human).